A 56-amino-acid polypeptide reads, in one-letter code: Small ribosomal subunit protein uS14 (56 aa).

4 residues coordinate Zn(2+): Cys-21, Cys-24, Cys-39, and Cys-42.

This sequence belongs to the universal ribosomal protein uS14 family. Requires Zn(2+) as cofactor.

The chain is Small ribosomal subunit protein uS14 (rps29A) from Guillardia theta (Cryptophyte).